The chain runs to 158 residues: 3-hydroxyacyl-[acyl-carrier-protein] dehydratase FabZ (158 aa).

H57 is a catalytic residue.

The protein belongs to the thioester dehydratase family. FabZ subfamily.

Its subcellular location is the cytoplasm. The enzyme catalyses a (3R)-hydroxyacyl-[ACP] = a (2E)-enoyl-[ACP] + H2O. Functionally, involved in unsaturated fatty acids biosynthesis. Catalyzes the dehydration of short chain beta-hydroxyacyl-ACPs and long chain saturated and unsaturated beta-hydroxyacyl-ACPs. This is 3-hydroxyacyl-[acyl-carrier-protein] dehydratase FabZ from Anaeromyxobacter sp. (strain Fw109-5).